Consider the following 403-residue polypeptide: F-box/LRR-repeat protein At1g06630 (403 aa).

Positions 11–59 constitute an F-box domain; sequence RDAINWLPDEILGKILSLLATKQAVSTSVLSKKWRTLFKLVDTLEFDDS. LRR repeat units follow at residues 239-262 and 288-312; these read LPNL…NLES and IRNV…KYGL.

The protein is F-box/LRR-repeat protein At1g06630 of Arabidopsis thaliana (Mouse-ear cress).